The sequence spans 353 residues: GTPase Obg (353 aa).

An Obg domain is found at 1-159; that stretch reads MKFLDEAKVY…RWIWLRLKLI (159 aa). Positions 160–327 constitute an OBG-type G domain; sequence ADAGLVGLPN…ALRALAAVIG (168 aa). GTP-binding positions include 166–173, 191–195, 212–215, 279–282, and 308–310; these read GLPNAGKS, FTTLH, DIPG, NKID, and SGI. Mg(2+) contacts are provided by Ser-173 and Thr-193. Residues 332-353 form a disordered region; the sequence is SDKAKGAADNAANAEPWAPQDA.

Belongs to the TRAFAC class OBG-HflX-like GTPase superfamily. OBG GTPase family. As to quaternary structure, monomer. It depends on Mg(2+) as a cofactor.

It is found in the cytoplasm. Functionally, an essential GTPase which binds GTP, GDP and possibly (p)ppGpp with moderate affinity, with high nucleotide exchange rates and a fairly low GTP hydrolysis rate. Plays a role in control of the cell cycle, stress response, ribosome biogenesis and in those bacteria that undergo differentiation, in morphogenesis control. The polypeptide is GTPase Obg (Rhodopseudomonas palustris (strain HaA2)).